We begin with the raw amino-acid sequence, 129 residues long: Cytochrome c oxidase subunit 5B, mitochondrial (129 aa).

Residues 1-31 (MASRLLRGAGALAAQALRARGPSGAAAVRSM) constitute a mitochondrion transit peptide. Residues Lys-68 and Lys-86 each carry the N6-acetyllysine modification. Residues Cys-91, Cys-93, Cys-113, and Cys-116 each coordinate Zn(2+). Lys-121 carries the post-translational modification N6-acetyllysine.

Belongs to the cytochrome c oxidase subunit 5B family. Component of the cytochrome c oxidase (complex IV, CIV), a multisubunit enzyme composed of 14 subunits. The complex is composed of a catalytic core of 3 subunits MT-CO1, MT-CO2 and MT-CO3, encoded in the mitochondrial DNA, and 11 supernumerary subunits COX4I, COX5A, COX5B, COX6A, COX6B, COX6C, COX7A, COX7B, COX7C, COX8 and NDUFA4, which are encoded in the nuclear genome. The complex exists as a monomer or a dimer and forms supercomplexes (SCs) in the inner mitochondrial membrane with NADH-ubiquinone oxidoreductase (complex I, CI) and ubiquinol-cytochrome c oxidoreductase (cytochrome b-c1 complex, complex III, CIII), resulting in different assemblies (supercomplex SCI(1)III(2)IV(1) and megacomplex MCI(2)III(2)IV(2)).

Its subcellular location is the mitochondrion inner membrane. The protein operates within energy metabolism; oxidative phosphorylation. In terms of biological role, component of the cytochrome c oxidase, the last enzyme in the mitochondrial electron transport chain which drives oxidative phosphorylation. The respiratory chain contains 3 multisubunit complexes succinate dehydrogenase (complex II, CII), ubiquinol-cytochrome c oxidoreductase (cytochrome b-c1 complex, complex III, CIII) and cytochrome c oxidase (complex IV, CIV), that cooperate to transfer electrons derived from NADH and succinate to molecular oxygen, creating an electrochemical gradient over the inner membrane that drives transmembrane transport and the ATP synthase. Cytochrome c oxidase is the component of the respiratory chain that catalyzes the reduction of oxygen to water. Electrons originating from reduced cytochrome c in the intermembrane space (IMS) are transferred via the dinuclear copper A center (CU(A)) of subunit 2 and heme A of subunit 1 to the active site in subunit 1, a binuclear center (BNC) formed by heme A3 and copper B (CU(B)). The BNC reduces molecular oxygen to 2 water molecules using 4 electrons from cytochrome c in the IMS and 4 protons from the mitochondrial matrix. The chain is Cytochrome c oxidase subunit 5B, mitochondrial (COX5B) from Pongo abelii (Sumatran orangutan).